A 78-amino-acid chain; its full sequence is RNA-binding protein Hfq (78 aa).

Positions 10-69 (DPFLNALRKEHVPVSIYLVNGIKLQGNIESFDQYVVLLRNTVTQMVYKHAISTVVPARPV) constitute a Sm domain.

Belongs to the Hfq family. In terms of assembly, homohexamer.

Functionally, RNA chaperone that binds small regulatory RNA (sRNAs) and mRNAs to facilitate mRNA translational regulation in response to envelope stress, environmental stress and changes in metabolite concentrations. Also binds with high specificity to tRNAs. The protein is RNA-binding protein Hfq of Paraburkholderia phytofirmans (strain DSM 17436 / LMG 22146 / PsJN) (Burkholderia phytofirmans).